An 84-amino-acid polypeptide reads, in one-letter code: Cytochrome b559 subunit alpha (84 aa).

Residues 22-36 (IIHIPAITILFASGF) form a helical membrane-spanning segment. H24 serves as a coordination point for heme.

Belongs to the PsbE/PsbF family. As to quaternary structure, heterodimer of an alpha subunit and a beta subunit. PSII is composed of 1 copy each of membrane proteins PsbA, PsbB, PsbC, PsbD, PsbE, PsbF, PsbH, PsbI, PsbJ, PsbK, PsbL, PsbM, PsbT, PsbX, Psb30/Ycf12, peripheral proteins PsbO, CyanoQ (PsbQ), PsbU, PsbV and a large number of cofactors. It forms dimeric complexes. Requires heme b as cofactor.

Its subcellular location is the cell inner membrane. Functionally, this b-type cytochrome is tightly associated with the reaction center of photosystem II (PSII). PSII is a light-driven water:plastoquinone oxidoreductase that uses light energy to abstract electrons from H(2)O, generating O(2) and a proton gradient subsequently used for ATP formation. It consists of a core antenna complex that captures photons, and an electron transfer chain that converts photonic excitation into a charge separation. This is Cytochrome b559 subunit alpha from Gloeobacter violaceus (strain ATCC 29082 / PCC 7421).